The sequence spans 190 residues: Abscisic acid receptor PYL2 (190 aa).

Residues 28 to 182 form an START-like region; that stretch reads FEPDPTTCTS…NLQKLGVAAT (155 aa). Residues Lys64, 93-98, 120-126, and Glu147 each bind abscisate; these read ASTSTE and RLKNYKS. Residues 89 to 93 carry the Gate loop motif; it reads SGLPA. The short motif at 119–121 is the Latch loop element; that stretch reads HRL.

It belongs to the PYR/PYL/RCAR abscisic acid intracellular receptor family. Homodimer. Binds ABA on one subunit only. Interacts with HAB1, ABI1 and ABI2, and possibly with other PP2Cs. Binds to CARs protein in an ABA-independent manner, both at the plasma membrane and in the nucleus.

Its subcellular location is the cytoplasm. The protein resides in the nucleus. It localises to the cell membrane. In terms of biological role, receptor for abscisic acid (ABA) required for ABA-mediated responses such as stomatal closure and germination inhibition. Inhibits the activity of group-A protein phosphatases type 2C (PP2Cs) when activated by ABA. Can be activated by both (-)-ABA and (+)-ABA. In Arabidopsis thaliana (Mouse-ear cress), this protein is Abscisic acid receptor PYL2 (PYL2).